The primary structure comprises 360 residues: uncharacterized protein (360 aa).

The ABC transporter domain occupies 4–235 (LSLQHIQKIY…PANMFVAGFI (232 aa)). An ATP-binding site is contributed by 37–44 (GPSGCGKS).

Belongs to the ABC transporter superfamily.

This is an uncharacterized protein from Escherichia coli O6:H1 (strain CFT073 / ATCC 700928 / UPEC).